The chain runs to 530 residues: Tegument protein UL21 homolog (530 aa).

The protein belongs to the alphaherpesvirinae UL21 protein family. In terms of assembly, interacts (via C-terminus) with UL16.

It is found in the virion tegument. Its subcellular location is the host cytoplasm. The protein localises to the host nucleus. In terms of biological role, may participate in DNA packaging/capsid maturation events. Promotes efficient incorporation of tegument proteins UL46, UL49, and US3 homologs into virions. May also play a role in capsid transport to the trans-Golgi network (TGN). This chain is Tegument protein UL21 homolog, found in Equus caballus (Horse).